The primary structure comprises 75 residues: UPF0512 protein C (75 aa).

This sequence belongs to the UPF0512 family.

The sequence is that of UPF0512 protein C from Dictyostelium discoideum (Social amoeba).